Reading from the N-terminus, the 267-residue chain is Placental prolactin-related protein 2 (267 aa).

N-linked (GlcNAc...) asparagine glycans are attached at residues Asn99 and Asn121. Disulfide bonds link Cys126–Cys244 and Cys261–Cys267.

The protein belongs to the somatotropin/prolactin family.

It is found in the secreted. In terms of biological role, placental prolactin-related proteins may play a specific role during gestation. This is Placental prolactin-related protein 2 (PRP2) from Bos taurus (Bovine).